Reading from the N-terminus, the 166-residue chain is MLVIHRRIAPQALWAAELLLNFEARSKSRLRCFSADGEDVGLFLERGQPPLHDGEFLQAEDGRVVRVCARPEQLLHVTCSNAFELTRAAYHLGNRHVALQVGDGWLRLLDDYVLKAMLEQLGAQTETIEAPFQPEHGAYGGGHHHSRHGDEDFNYPPKLHQFGVRL.

Positions 133–154 are disordered; sequence QPEHGAYGGGHHHSRHGDEDFN.

This sequence belongs to the UreE family.

Its subcellular location is the cytoplasm. Functionally, involved in urease metallocenter assembly. Binds nickel. Probably functions as a nickel donor during metallocenter assembly. This Pseudomonas fluorescens (strain SBW25) protein is Urease accessory protein UreE.